A 189-amino-acid polypeptide reads, in one-letter code: Selenoprotein S (189 aa).

Residues 29 to 49 traverse the membrane as a helical segment; that stretch reads VVLSSYGWYILLGCILIYLLI. Residues 114 to 125 show a composition bias toward basic and acidic residues; sequence IETWDRMKEGKS. The disordered stretch occupies residues 114–189; the sequence is IETWDRMKEG…RRGPSSGGUG (76 aa). Over residues 136–147 the composition is skewed to low complexity; that stretch reads PSPSTSTSAATK. Positions 148–157 are enriched in basic and acidic residues; the sequence is PKQEKQERKT. A non-standard amino acid (selenocysteine) is located at residue selenocysteine 188.

The protein belongs to the selenoprotein S family.

The protein localises to the endoplasmic reticulum membrane. It is found in the cytoplasm. Its function is as follows. Involved in the degradation process of misfolded endoplasmic reticulum (ER) luminal proteins. Participates in the transfer of misfolded proteins from the ER to the cytosol, where they are destroyed by the proteasome in a ubiquitin-dependent manner. This chain is Selenoprotein S (vimp), found in Xenopus tropicalis (Western clawed frog).